The sequence spans 317 residues: Putative ribose-phosphate pyrophosphokinase (317 aa).

The binding of phosphoribosylpyrophosphate stretch occupies residues 211–224 (GRDVIVLDDEIAKG).

The protein belongs to the ribose-phosphate pyrophosphokinase family.

The catalysed reaction is D-ribose 5-phosphate + ATP = 5-phospho-alpha-D-ribose 1-diphosphate + AMP + H(+). The polypeptide is Putative ribose-phosphate pyrophosphokinase (Streptomyces coelicolor (strain ATCC BAA-471 / A3(2) / M145)).